The following is a 250-amino-acid chain: Probable transcriptional regulatory protein Rxyl_1318 (250 aa).

This sequence belongs to the TACO1 family.

The protein resides in the cytoplasm. The protein is Probable transcriptional regulatory protein Rxyl_1318 of Rubrobacter xylanophilus (strain DSM 9941 / JCM 11954 / NBRC 16129 / PRD-1).